A 169-amino-acid polypeptide reads, in one-letter code: NADH-quinone oxidoreductase subunit I (169 aa).

4Fe-4S ferredoxin-type domains are found at residues 61 to 90 and 100 to 129; these read RRYD…IESE and TRYD…ETHI. Cys-70, Cys-73, Cys-76, Cys-80, Cys-109, Cys-112, Cys-115, and Cys-119 together coordinate [4Fe-4S] cluster.

The protein belongs to the complex I 23 kDa subunit family. As to quaternary structure, NDH-1 is composed of 14 different subunits. Subunits NuoA, H, J, K, L, M, N constitute the membrane sector of the complex. It depends on [4Fe-4S] cluster as a cofactor.

It is found in the cell inner membrane. The catalysed reaction is a quinone + NADH + 5 H(+)(in) = a quinol + NAD(+) + 4 H(+)(out). Functionally, NDH-1 shuttles electrons from NADH, via FMN and iron-sulfur (Fe-S) centers, to quinones in the respiratory chain. The immediate electron acceptor for the enzyme in this species is believed to be ubiquinone. Couples the redox reaction to proton translocation (for every two electrons transferred, four hydrogen ions are translocated across the cytoplasmic membrane), and thus conserves the redox energy in a proton gradient. The polypeptide is NADH-quinone oxidoreductase subunit I (Verminephrobacter eiseniae (strain EF01-2)).